A 942-amino-acid polypeptide reads, in one-letter code: DNA mismatch repair protein MutS (942 aa).

An ATP-binding site is contributed by Gly-613–Ser-620.

It belongs to the DNA mismatch repair MutS family.

Its function is as follows. This protein is involved in the repair of mismatches in DNA. It is possible that it carries out the mismatch recognition step. This protein has a weak ATPase activity. The sequence is that of DNA mismatch repair protein MutS from Clostridium botulinum (strain Eklund 17B / Type B).